Consider the following 324-residue polypeptide: NADH-cytochrome b5 reductase 2 (324 aa).

Residues 31–47 (IPLIGGITLAAGAGYYY) traverse the membrane as a helical segment. Positions 70–178 (QGWIGLKLAH…KGPLPKYPWE (109 aa)) constitute an FAD-binding FR-type domain. 181 to 216 (KHDHICLIAGGTGITPMYQLVRKIFSNPEDKTKVTL) provides a ligand contact to FAD.

This sequence belongs to the flavoprotein pyridine nucleotide cytochrome reductase family. The cofactor is FAD.

The protein resides in the mitochondrion outer membrane. It carries out the reaction 2 Fe(III)-[cytochrome b5] + NADH = 2 Fe(II)-[cytochrome b5] + NAD(+) + H(+). May mediate the reduction of outer membrane cytochrome b5. This is NADH-cytochrome b5 reductase 2 (MCR1) from Ajellomyces capsulatus (strain NAm1 / WU24) (Darling's disease fungus).